Reading from the N-terminus, the 296-residue chain is Fructose-bisphosphate aldolase class 1 (296 aa).

The active-site Proton acceptor is the E175. The Schiff-base intermediate with dihydroxyacetone-P role is filled by K212.

Belongs to the class I fructose-bisphosphate aldolase family.

The catalysed reaction is beta-D-fructose 1,6-bisphosphate = D-glyceraldehyde 3-phosphate + dihydroxyacetone phosphate. It participates in carbohydrate degradation; glycolysis; D-glyceraldehyde 3-phosphate and glycerone phosphate from D-glucose: step 4/4. The chain is Fructose-bisphosphate aldolase class 1 from Staphylococcus aureus (strain bovine RF122 / ET3-1).